Consider the following 608-residue polypeptide: Glutamine--fructose-6-phosphate aminotransferase [isomerizing] (608 aa).

Residue C2 is the Nucleophile; for GATase activity of the active site. The 216-residue stretch at 2 to 217 folds into the Glutamine amidotransferase type-2 domain; it reads CGIVGYIGKK…DNEFVLMTKD (216 aa). SIS domains lie at 284-424 and 453-598; these read ISKE…EKGT and IMKK…VDKP. K603 (for Fru-6P isomerization activity) is an active-site residue.

In terms of assembly, homodimer.

The protein localises to the cytoplasm. The catalysed reaction is D-fructose 6-phosphate + L-glutamine = D-glucosamine 6-phosphate + L-glutamate. Functionally, catalyzes the first step in hexosamine metabolism, converting fructose-6P into glucosamine-6P using glutamine as a nitrogen source. The protein is Glutamine--fructose-6-phosphate aminotransferase [isomerizing] of Clostridium tetani (strain Massachusetts / E88).